We begin with the raw amino-acid sequence, 219 residues long: Large ribosomal subunit protein uL16 (219 aa).

It belongs to the universal ribosomal protein uL16 family. Component of the large ribosomal subunit. Mature ribosomes consist of a small (40S) and a large (60S) subunit. The 40S subunit contains about 33 different proteins and 1 molecule of RNA (18S). The 60S subunit contains about 49 different proteins and 3 molecules of RNA (28S, 5.8S and 5S).

The chain is Large ribosomal subunit protein uL16 (RpL10) from Bombyx mandarina (Wild silk moth).